Consider the following 375-residue polypeptide: Stomatin-2 (375 aa).

Residues Met-1–Gly-75 form a disordered region. The segment covering Ser-11–Asn-50 has biased composition (low complexity). The chain crosses the membrane as a helical span at residues Gly-120–Phe-140.

It belongs to the band 7/mec-2 family.

It localises to the membrane. Its function is as follows. May be involved in cilia-related function. The polypeptide is Stomatin-2 (sto-2) (Caenorhabditis elegans).